We begin with the raw amino-acid sequence, 202 residues long: Small ribosomal subunit protein uS4c (202 aa).

The region spanning 89–152 is the S4 RNA-binding domain; the sequence is MRLDNIIFRL…QSNTFINNCI (64 aa).

It belongs to the universal ribosomal protein uS4 family. Part of the 30S ribosomal subunit. Contacts protein S5. The interaction surface between S4 and S5 is involved in control of translational fidelity.

The protein resides in the plastid. Functionally, one of the primary rRNA binding proteins, it binds directly to 16S rRNA where it nucleates assembly of the body of the 30S subunit. In terms of biological role, with S5 and S12 plays an important role in translational accuracy. This Epifagus virginiana (Beechdrops) protein is Small ribosomal subunit protein uS4c (rps4).